The following is a 129-amino-acid chain: Glycine cleavage system H protein (129 aa).

One can recognise a Lipoyl-binding domain in the interval 24-106 (LLKIGVSEFA…IGDGWLVILK (83 aa)). Lysine 65 bears the N6-lipoyllysine mark.

The protein belongs to the GcvH family. As to quaternary structure, the glycine cleavage system is composed of four proteins: P, T, L and H. The cofactor is (R)-lipoate.

In terms of biological role, the glycine cleavage system catalyzes the degradation of glycine. The H protein shuttles the methylamine group of glycine from the P protein to the T protein. The sequence is that of Glycine cleavage system H protein from Prochlorococcus marinus (strain MIT 9301).